A 928-amino-acid chain; its full sequence is Isoleucine--tRNA ligase (928 aa).

The 'HIGH' region signature appears at 57-67 (PFANGNIHMGH). Glutamate 554 provides a ligand contact to L-isoleucyl-5'-AMP. Positions 595 to 599 (KMSKS) match the 'KMSKS' region motif. Residue lysine 598 participates in ATP binding. Residues cysteine 887, cysteine 890, cysteine 907, and cysteine 910 each contribute to the Zn(2+) site.

This sequence belongs to the class-I aminoacyl-tRNA synthetase family. IleS type 1 subfamily. As to quaternary structure, monomer. Zn(2+) is required as a cofactor.

The protein resides in the cytoplasm. It carries out the reaction tRNA(Ile) + L-isoleucine + ATP = L-isoleucyl-tRNA(Ile) + AMP + diphosphate. Its function is as follows. Catalyzes the attachment of isoleucine to tRNA(Ile). As IleRS can inadvertently accommodate and process structurally similar amino acids such as valine, to avoid such errors it has two additional distinct tRNA(Ile)-dependent editing activities. One activity is designated as 'pretransfer' editing and involves the hydrolysis of activated Val-AMP. The other activity is designated 'posttransfer' editing and involves deacylation of mischarged Val-tRNA(Ile). The protein is Isoleucine--tRNA ligase of Lactobacillus johnsonii (strain CNCM I-12250 / La1 / NCC 533).